Here is a 1111-residue protein sequence, read N- to C-terminus: Lon protease homolog, mitochondrial (1111 aa).

Residues 1 to 21 (MLRSSRSRLVTRNILLRQFKN) constitute a mitochondrion transit peptide. Disordered regions lie at residues 85-177 (IQLK…AKQP) and 288-311 (PPTS…ENNE). The span at 88–125 (KQDDKGKDIDQPESENRKKEEEQVPTEEKDNDTAKESE) shows a compositional bias: basic and acidic residues. Residues 126-135 (TSQQRDSVAE) show a composition bias toward polar residues. The segment covering 145–167 (GASGNGESSGNGSGDDGNNGSGN) has biased composition (gly residues). In terms of domain architecture, Lon N-terminal spans 185 to 450 (VMALPISRRP…KALTVLKKEL (266 aa)). The segment covering 294–306 (NLKDESDVSKSEG) has biased composition (basic and acidic residues). 602–609 (GPPGVGKT) contacts ATP. Composition is skewed to basic and acidic residues over residues 819–835 (ENEE…KQSE) and 853–865 (ELIK…DNKG). Residues 819–866 (ENEEVKDQKDIKVKQSENKSSAEASTVESTTEENELIKTQKSHDNKGS) are disordered. Positions 899–1085 (STPPGVVMGL…EDVFQRLFGD (187 aa)) constitute a Lon proteolytic domain. Catalysis depends on residues S991 and K1034.

Belongs to the peptidase S16 family. In terms of assembly, homohexamer or homoheptamer. Organized in a ring with a central cavity.

The protein localises to the mitochondrion matrix. It carries out the reaction Hydrolysis of proteins in presence of ATP.. ATP-dependent serine protease that mediates the selective degradation of misfolded, unassembled or oxidatively damaged polypeptides as well as certain short-lived regulatory proteins in the mitochondrial matrix. May also have a chaperone function in the assembly of inner membrane protein complexes. Participates in the regulation of mitochondrial gene expression and in the maintenance of the integrity of the mitochondrial genome. Binds to mitochondrial DNA in a site-specific manner. The polypeptide is Lon protease homolog, mitochondrial (Kluyveromyces lactis (strain ATCC 8585 / CBS 2359 / DSM 70799 / NBRC 1267 / NRRL Y-1140 / WM37) (Yeast)).